The sequence spans 404 residues: Zinc metalloprotease Rip1 (404 aa).

A helical transmembrane segment spans residues 1 to 21 (MMFVTGIVLFALAILISVALH). Residue H21 participates in Zn(2+) binding. E22 is an active-site residue. H25 serves as a coordination point for Zn(2+). Residues 104–124 (PGMNLAICLVLIYAIALVWGL) form a helical membrane-spanning segment. A PDZ domain is found at 121-203 (VWGLPNLHPP…SVPIVVERDG (83 aa)). A Zn(2+)-binding site is contributed by D202. 2 helical membrane passes run 313–333 (LWVAFWFFLAQLNLILAAINL) and 373–393 (LLPATYVVLVLVVGYMLLTVT).

Belongs to the peptidase M50B family. Zn(2+) is required as a cofactor.

The protein localises to the cell membrane. Its function is as follows. A probable site-2 protease (S2P) that cleaves type-2 transmembrane proteins within their membrane-spanning domains. Degrades anti-sigma factors RskA, RslA and RsmA, releasing sigma factors SigK, SigL and SigM from the cellular membrane, activating signaling pathways. Does not act on RsdA. Regulates the composition of extractable mycolic acids in the cell envelope in response to changes in membrane fluidity. Mediates transcriptional regulation of mycolic acid biosynthetic genes in response to detergent. Probably also cleaves PbpB (PBP3, FtsI); this cleavage is inhibited by Wag31-PbpBI interaction. Functionally, regulated intramembrane proteolysis (RIP) occurs when an extracytoplasmic signal (possibly oxidative stress) triggers a concerted proteolytic cascade to transmit information and elicit cellular responses. The membrane-spanning regulatory substrate protein (includes anti-sigma factors RskA, RslA, RsmA, and PbpB) is first cut extracytoplasmically (site-1 protease, S1P), then within the membrane itself (site-2 protease, S2P, this entry), while cytoplasmic proteases finish degrading the regulatory protein, liberating the effector protein (ECF sigma factors SigK, SigL and SigM). This Mycobacterium tuberculosis (strain ATCC 35801 / TMC 107 / Erdman) protein is Zinc metalloprotease Rip1 (rip1).